A 213-amino-acid chain; its full sequence is NADH-quinone oxidoreductase subunit I (213 aa).

4Fe-4S ferredoxin-type domains lie at 74-103 (RFIE…METS) and 113-142 (GNYS…HGTE). [4Fe-4S] cluster is bound by residues C83, C86, C89, C93, C122, C125, C128, and C132.

Belongs to the complex I 23 kDa subunit family. As to quaternary structure, NDH-1 is composed of 14 different subunits. Subunits NuoA, H, J, K, L, M, N constitute the membrane sector of the complex. [4Fe-4S] cluster is required as a cofactor.

Its subcellular location is the cell inner membrane. The enzyme catalyses a quinone + NADH + 5 H(+)(in) = a quinol + NAD(+) + 4 H(+)(out). In terms of biological role, NDH-1 shuttles electrons from NADH, via FMN and iron-sulfur (Fe-S) centers, to quinones in the respiratory chain. The immediate electron acceptor for the enzyme in this species is believed to be ubiquinone. Couples the redox reaction to proton translocation (for every two electrons transferred, four hydrogen ions are translocated across the cytoplasmic membrane), and thus conserves the redox energy in a proton gradient. In Campylobacter jejuni subsp. jejuni serotype O:6 (strain 81116 / NCTC 11828), this protein is NADH-quinone oxidoreductase subunit I.